A 216-amino-acid chain; its full sequence is Ras-related protein Rab-2B (216 aa).

GTP-binding residues include Gly-16, Val-17, Gly-18, Lys-19, Ser-20, Cys-21, and Thr-38. Residue Ser-20 coordinates Mg(2+). A Switch 1 motif is present at residues 37 to 42 (LTIGVE). Residues Thr-38 and Asp-61 each contribute to the Mg(2+) site. The Switch 2 signature appears at 63 to 72 (AGQESFRSIT). 6 residues coordinate GTP: Gly-64, Asn-119, Lys-120, Asp-122, Ala-150, and Lys-151. A compositionally biased stretch (polar residues) spans 189–207 (PQQSITSSVGPCSPQQNVS). Positions 189 to 216 (PQQSITSSVGPCSPQQNVSDIGPDSGCC) are disordered. S-geranylgeranyl cysteine attachment occurs at residues Cys-215 and Cys-216.

It belongs to the small GTPase superfamily. Rab family. As to quaternary structure, interacts (in GTP-bound form) with GARIN4 (via N-terminus). Interacts (in GTP-bound form) with GARIN5A. Interacts (in GTP-bound form) with GARIN1B. Interacts with VPS39 and VPS41. It depends on Mg(2+) as a cofactor.

It localises to the cell membrane. The protein localises to the endoplasmic reticulum membrane. Its subcellular location is the golgi apparatus membrane. It is found in the cytoplasmic vesicle. The protein resides in the secretory vesicle. It localises to the acrosome. The protein localises to the autophagosome membrane. The catalysed reaction is GTP + H2O = GDP + phosphate + H(+). Its activity is regulated as follows. Regulated by guanine nucleotide exchange factors (GEFs) which promote the exchange of bound GDP for free GTP, GTPase activating proteins (GAPs) which increase the GTP hydrolysis activity, and GDP dissociation inhibitors (GDIs) which inhibit the dissociation of the nucleotide from the GTPase. Functionally, the small GTPases Rab are key regulators of intracellular membrane trafficking, from the formation of transport vesicles to their fusion with membranes. Rabs cycle between active GTP-bound and inactive GDP-bound states. In their active state, drive transport of vesicular carriers from donor organelles to acceptor organelles to regulate the membrane traffic that maintains organelle identity and morphology. Regulates the compacted morphology of the Golgi. Promotes cytosolic DNA-induced innate immune responses. Regulates IFN responses against DNA viruses by regulating the CGAS-STING signaling axis. Together with RAB2A redundantly required for efficient autophagic flux. This is Ras-related protein Rab-2B (Rab2b) from Mus musculus (Mouse).